The primary structure comprises 118 residues: MSCQQSQQQCQPPPKCTPKCPPKCTPKCPPKCPPKCPPQCSAPCPPPVSSCCGSSSGGCCSSEGGGCCLSHHRPRQSLRRRPQSSSCCGSGSGQQSGGSSCCHSSGGSGCCHSSGGCC.

The span at 1–10 shows a compositional bias: low complexity; that stretch reads MSCQQSQQQC. Disordered regions lie at residues 1 to 32 and 72 to 118; these read MSCQ…PPKC and HRPR…GGCC. A compositionally biased stretch (pro residues) spans 11–32; the sequence is QPPPKCTPKCPPKCTPKCPPKC. Residues 72-82 are compositionally biased toward basic residues; that stretch reads HRPRQSLRRRP. A compositionally biased stretch (low complexity) spans 97-118; that stretch reads GGSSCCHSSGGSGCCHSSGGCC.

The protein belongs to the LCE family. In terms of assembly, interacts with CYSRT1; the interaction is direct. As to expression, skin-specific. Expression was readily detected in adult trunk skin, adult arm skin, fetal skin, penal skin, vulva, esophagus and tongue. Not expressed in the cervix, rectum, lung, colon, or placenta. Expression is observed in the heart.

Precursors of the cornified envelope of the stratum corneum. The polypeptide is Late cornified envelope protein 5A (LCE5A) (Homo sapiens (Human)).